Consider the following 181-residue polypeptide: Ubiquitin-conjugating enzyme E2 19 (181 aa).

Positions 1–10 are enriched in polar residues; that stretch reads MATVNGYTGN. The disordered stretch occupies residues 1–33; it reads MATVNGYTGNTPAATTPAATGSKQSAPPTKTVD. Low complexity predominate over residues 11 to 20; it reads TPAATTPAAT. The UBC core domain occupies 36 to 181; sequence SVLKRLQSEL…VEKLYKPLNA (146 aa). Cys-120 functions as the Glycyl thioester intermediate in the catalytic mechanism.

Belongs to the ubiquitin-conjugating enzyme family. Interacts with OR. Binds to LOT1. In terms of tissue distribution, expressed in all tissues with cell division activities and in mature leaves.

It is found in the cytoplasm. The protein localises to the nucleus. It catalyses the reaction S-ubiquitinyl-[E1 ubiquitin-activating enzyme]-L-cysteine + [E2 ubiquitin-conjugating enzyme]-L-cysteine = [E1 ubiquitin-activating enzyme]-L-cysteine + S-ubiquitinyl-[E2 ubiquitin-conjugating enzyme]-L-cysteine.. The protein operates within protein modification; protein ubiquitination. Its function is as follows. Accepts the ubiquitin from the E1 complex and catalyzes its covalent attachment to other proteins. Part of the anaphase-promoting complex (APC). May have a key function during cell cycle and be involved in cyclin B1 degradation. Triggers OR ubiquitination that mediates its subsequent nuclear localization. Involved in the repression of early light-induced proteins (ELIPs, e.g. ELIP1 and ELIP2) expression, probably via OR nuclear relocalization. The chain is Ubiquitin-conjugating enzyme E2 19 from Arabidopsis thaliana (Mouse-ear cress).